Reading from the N-terminus, the 347-residue chain is S-adenosylmethionine:tRNA ribosyltransferase-isomerase (347 aa).

The protein belongs to the QueA family. In terms of assembly, monomer.

It is found in the cytoplasm. The catalysed reaction is 7-aminomethyl-7-carbaguanosine(34) in tRNA + S-adenosyl-L-methionine = epoxyqueuosine(34) in tRNA + adenine + L-methionine + 2 H(+). The protein operates within tRNA modification; tRNA-queuosine biosynthesis. Functionally, transfers and isomerizes the ribose moiety from AdoMet to the 7-aminomethyl group of 7-deazaguanine (preQ1-tRNA) to give epoxyqueuosine (oQ-tRNA). The sequence is that of S-adenosylmethionine:tRNA ribosyltransferase-isomerase from Pseudomonas aeruginosa (strain LESB58).